We begin with the raw amino-acid sequence, 344 residues long: MAP3K12-binding inhibitory protein 1 (344 aa).

Phosphoserine is present on Ser91. Residues Lys94, Lys118, Lys129, Lys139, Lys153, and Lys235 each participate in a glycyl lysine isopeptide (Lys-Gly) (interchain with G-Cter in SUMO2) cross-link. The interval 172–344 is interaction with MAP3K12; the sequence is AEINENNVRE…AESMATHHLP (173 aa). A leucine-zipper 1 region spans residues 271-285; the sequence is IYQRIKKLEDKILEL. Lys301 is subject to N6-acetyllysine; alternate. A Glycyl lysine isopeptide (Lys-Gly) (interchain with G-Cter in SUMO2); alternate cross-link involves residue Lys301. Glycyl lysine isopeptide (Lys-Gly) (interchain with G-Cter in SUMO2) cross-links involve residues Lys304 and Lys325. Residues 314-329 are leucine-zipper 2; the sequence is LAELDEKISALKQALL.

Component of the ADA2A-containing complex (ATAC), composed of KAT14, KAT2A, TADA2L, TADA3L, ZZ3, MBIP, WDR5, YEATS2, CCDC101 and DR1. In the complex, it probably interacts directly with KAT2A, KAT14 and WDR5. Ubiquitous. High expression seen in the heart and lung.

It is found in the nucleus. The protein resides in the cytoplasm. Its function is as follows. Inhibits the MAP3K12 activity to induce the activation of the JNK/SAPK pathway. Component of the ATAC complex, a complex with histone acetyltransferase activity on histones H3 and H4. The protein is MAP3K12-binding inhibitory protein 1 (MBIP) of Homo sapiens (Human).